Reading from the N-terminus, the 89-residue chain is Small ribosomal subunit protein uS17 (89 aa).

The protein belongs to the universal ribosomal protein uS17 family. In terms of assembly, part of the 30S ribosomal subunit.

Its function is as follows. One of the primary rRNA binding proteins, it binds specifically to the 5'-end of 16S ribosomal RNA. The polypeptide is Small ribosomal subunit protein uS17 (Azoarcus sp. (strain BH72)).